A 505-amino-acid chain; its full sequence is Histidine ammonia-lyase (505 aa).

The 5-imidazolinone (Ala-Gly) cross-link spans 141 to 143 (ASG). Position 142 is a 2,3-didehydroalanine (Ser) (Ser142).

The protein belongs to the PAL/histidase family. Contains an active site 4-methylidene-imidazol-5-one (MIO), which is formed autocatalytically by cyclization and dehydration of residues Ala-Ser-Gly.

Its subcellular location is the cytoplasm. The catalysed reaction is L-histidine = trans-urocanate + NH4(+). It functions in the pathway amino-acid degradation; L-histidine degradation into L-glutamate; N-formimidoyl-L-glutamate from L-histidine: step 1/3. The protein is Histidine ammonia-lyase of Bacillus cereus (strain G9842).